The chain runs to 820 residues: Catenin beta (820 aa).

Over residues 1–16 (MEQARYSNQQSVNPQQ) the composition is skewed to polar residues. The disordered stretch occupies residues 1–74 (MEQARYSNQQ…SRHEDGGEEA (74 aa)). Over residues 52 to 63 (SSATSHPPSVSS) the composition is skewed to low complexity. ARM repeat units lie at residues 157 to 196 (NYQD…QLSK), 199 to 239 (ASRH…NLSH), 241 to 280 (RAGL…NLLL), 283 to 322 (EGSK…ILAY), 367 to 405 (HNNK…RNLS), 406 to 445 (DCHR…NLTC), 448 to 489 (SRNK…HVTS), 495 to 535 (EMGQ…NLAL), 603 to 642 (SHNR…ELSL), and 644 to 683 (KQGA…RMSD). The tract at residues 708-811 (PWGDPLDMPS…LDSIPPADNT (104 aa)) is disordered. Low complexity predominate over residues 785–796 (GMDPGLPDMGPP).

This sequence belongs to the beta-catenin family.

The protein localises to the cytoplasm. It localises to the cytoskeleton. Its function is as follows. Binds to the cytoplasmic domain of the cell-cell adhesion molecule E-cadherin, and perhaps to other (membrane) proteins. The association of catenins to cadherins produces a complex which is linked to the actin filament network, and which seems to be of primary importance for cadherins cell-adhesion properties. The chain is Catenin beta from Tripneustes gratilla (Hawaian sea urchin).